Consider the following 334-residue polypeptide: GTPase Obg (334 aa).

In terms of domain architecture, Obg spans 1–159; sequence MRFVDEVVIK…KEVRLELNLL (159 aa). Residues 160–331 form the OBG-type G domain; that stretch reads ADVALLGLPN…LAKKLNEFLQ (172 aa). GTP is bound by residues 166–173, 191–195, 212–215, 282–285, and 312–314; these read GLPNAGKS, FTTMY, DIPG, NKID, and SAA. The Mg(2+) site is built by S173 and T193.

Belongs to the TRAFAC class OBG-HflX-like GTPase superfamily. OBG GTPase family. Monomer. Mg(2+) serves as cofactor.

It is found in the cytoplasm. In terms of biological role, an essential GTPase which binds GTP, GDP and possibly (p)ppGpp with moderate affinity, with high nucleotide exchange rates and a fairly low GTP hydrolysis rate. Plays a role in control of the cell cycle, stress response, ribosome biogenesis and in those bacteria that undergo differentiation, in morphogenesis control. This Francisella tularensis subsp. tularensis (strain WY96-3418) protein is GTPase Obg.